Reading from the N-terminus, the 379-residue chain is 2-methylcitrate synthase (379 aa).

His187 lines the substrate pocket. His222 is an active-site residue. 264 to 268 (KVMGF) is a binding site for CoA. The active site involves His270. Arg279 contributes to the substrate binding site. Asp321 is a catalytic residue. Residues Arg346 and Arg365 each contribute to the substrate site.

Belongs to the citrate synthase family. As to quaternary structure, homodimer.

The catalysed reaction is propanoyl-CoA + oxaloacetate + H2O = (2S,3S)-2-methylcitrate + CoA + H(+). The enzyme catalyses oxaloacetate + acetyl-CoA + H2O = citrate + CoA + H(+). The protein operates within organic acid metabolism; propanoate degradation. Its pathway is carbohydrate metabolism; tricarboxylic acid cycle; isocitrate from oxaloacetate: step 1/2. In terms of biological role, involved in the catabolism of short chain fatty acids (SCFA) via the tricarboxylic acid (TCA)(acetyl degradation route) and via the 2-methylcitrate cycle I (propionate degradation route). Catalyzes the Claisen condensation of propionyl-CoA and oxaloacetate (OAA) to yield 2-methylcitrate (2-MC) and CoA. Also catalyzes the condensation of oxaloacetate with acetyl-CoA but with a lower specificity. The chain is 2-methylcitrate synthase (gltA) from Antarctic bacterium DS2-3R.